Consider the following 349-residue polypeptide: UPF0324 inner membrane protein YeiH (349 aa).

Topologically, residues Met1–Thr12 are periplasmic. The helical transmembrane segment at Met13–Ala35 threads the bilayer. The Cytoplasmic segment spans residues Ile36–Ala38. Residues Val39 to Val61 form a helical membrane-spanning segment. The Periplasmic segment spans residues Tyr62–Asp99. The chain crosses the membrane as a helical span at residues Val100–Leu122. The Cytoplasmic segment spans residues Gly123–Arg131. Residues His132–Ala151 form a helical membrane-spanning segment. The Periplasmic portion of the chain corresponds to Thr152 to Lys162. The helical transmembrane segment at Val163–Tyr185 threads the bilayer. The Cytoplasmic segment spans residues Pro186–Lys261. Residues Ile262–Pro284 form a helical membrane-spanning segment. The Periplasmic portion of the chain corresponds to Lys285–Met290. Residues Leu291 to Ser313 traverse the membrane as a helical segment. Residues Ala314–Pro322 lie on the Cytoplasmic side of the membrane. Residues Leu323–His345 form a helical membrane-spanning segment. At Ser346 to Ala349 the chain is on the periplasmic side.

Belongs to the UPF0324 family.

Its subcellular location is the cell inner membrane. This chain is UPF0324 inner membrane protein YeiH (yeiH), found in Salmonella typhi.